The primary structure comprises 365 residues: Protein-glutamate methylesterase/protein-glutamine glutaminase 2 (365 aa).

The region spanning 18 to 135 is the Response regulatory domain; it reads RVLIVDDSAM…GQGLPAIMRD (118 aa). D69 carries the post-translational modification 4-aspartylphosphate. The 194-residue stretch at 162–355 folds into the CheB-type methylesterase domain; the sequence is GASEDWIHAL…ARMMLAAAAD (194 aa). Catalysis depends on residues S174, H200, and D297.

It belongs to the CheB family. Phosphorylated by CheA. Phosphorylation of the N-terminal regulatory domain activates the methylesterase activity.

Its subcellular location is the cytoplasm. It carries out the reaction [protein]-L-glutamate 5-O-methyl ester + H2O = L-glutamyl-[protein] + methanol + H(+). It catalyses the reaction L-glutaminyl-[protein] + H2O = L-glutamyl-[protein] + NH4(+). Functionally, involved in chemotaxis. Part of a chemotaxis signal transduction system that modulates chemotaxis in response to various stimuli. Catalyzes the demethylation of specific methylglutamate residues introduced into the chemoreceptors (methyl-accepting chemotaxis proteins or MCP) by CheR. Also mediates the irreversible deamidation of specific glutamine residues to glutamic acid. In Cereibacter sphaeroides (strain ATCC 17023 / DSM 158 / JCM 6121 / CCUG 31486 / LMG 2827 / NBRC 12203 / NCIMB 8253 / ATH 2.4.1.) (Rhodobacter sphaeroides), this protein is Protein-glutamate methylesterase/protein-glutamine glutaminase 2.